The chain runs to 425 residues: Bifunctional phosphoribosylaminoimidazole carboxylase/phosphoribosylaminoimidazole succinocarboxamide synthetase (425 aa).

Position 2 is an N-acetylalanine (Ala2). The interval 2-260 (ATAVVVNIGK…WVADRVELLL (259 aa)) is SAICAR synthetase domain. Tyr22 carries the post-translational modification Phosphotyrosine. N6-acetyllysine is present on Lys36. Ser107 carries the post-translational modification Phosphoserine. Thr238 carries the post-translational modification Phosphothreonine. N6-acetyllysine is present on Lys247. Positions 261 to 266 (KSDSQC) are linker. Positions 267–425 (RVVVLMGSTS…ADKKVRQCNL (159 aa)) are AIR carboxylase domain. Ser274 carries the phosphoserine modification. Ser332 lines the CO2 pocket.

It in the N-terminal section; belongs to the SAICAR synthetase family. This sequence in the C-terminal section; belongs to the AIR carboxylase family. Class II subfamily. In terms of assembly, homooctamer.

It catalyses the reaction 5-amino-1-(5-phospho-D-ribosyl)imidazole-4-carboxylate + L-aspartate + ATP = (2S)-2-[5-amino-1-(5-phospho-beta-D-ribosyl)imidazole-4-carboxamido]succinate + ADP + phosphate + 2 H(+). The enzyme catalyses 5-amino-1-(5-phospho-D-ribosyl)imidazole-4-carboxylate + H(+) = 5-amino-1-(5-phospho-beta-D-ribosyl)imidazole + CO2. The protein operates within purine metabolism; IMP biosynthesis via de novo pathway; 5-amino-1-(5-phospho-D-ribosyl)imidazole-4-carboxamide from 5-amino-1-(5-phospho-D-ribosyl)imidazole-4-carboxylate: step 1/2. Its pathway is purine metabolism; IMP biosynthesis via de novo pathway; 5-amino-1-(5-phospho-D-ribosyl)imidazole-4-carboxylate from 5-amino-1-(5-phospho-D-ribosyl)imidazole (carboxylase route): step 1/1. In terms of biological role, bifunctional phosphoribosylaminoimidazole carboxylase and phosphoribosylaminoimidazole succinocarboxamide synthetase catalyzing two reactions of the de novo purine biosynthetic pathway. In Mus musculus (Mouse), this protein is Bifunctional phosphoribosylaminoimidazole carboxylase/phosphoribosylaminoimidazole succinocarboxamide synthetase.